The primary structure comprises 377 residues: MMARPWNFSAGPSALPEAVLQQAAAEMLDWHGSGMSVMEMSHRGKHFVQICDEAEADLRELLGLPADYAVMFMQGGGLGENAIVPMNLMGRRSTPAADFVVTGHWSTRSHKEAGRYGDAQIAASAAEATEIDGQAQSSWTWLPPVDTWRVRKDSAYLHLCSNETIGGVEFTEWPDPASLGAPDVPLVVDVSSHFLSRPLDIARAGLVFAGAQKNAGPAGVTVVIARRDLLGHALPICPSAFDYANVAADHSRYNTPPTFAIYVMGLVFKWIKAHGGVRGMEEANRAKAELLYGYLDGSAFYRNPVQASVRSRMNVPFVLRDESLNDAFLQGAEAAGLMQLKGHKSVGGMRASIYNAMPLAGVQALIDYLKEFERRHG.

An L-glutamate-binding site is contributed by Arg-43. Positions 105, 164, 189, and 212 each coordinate pyridoxal 5'-phosphate. An N6-(pyridoxal phosphate)lysine modification is found at Lys-213. Residue 254–255 (NT) participates in pyridoxal 5'-phosphate binding.

This sequence belongs to the class-V pyridoxal-phosphate-dependent aminotransferase family. SerC subfamily. Homodimer. Pyridoxal 5'-phosphate serves as cofactor.

It is found in the cytoplasm. It catalyses the reaction O-phospho-L-serine + 2-oxoglutarate = 3-phosphooxypyruvate + L-glutamate. It carries out the reaction 4-(phosphooxy)-L-threonine + 2-oxoglutarate = (R)-3-hydroxy-2-oxo-4-phosphooxybutanoate + L-glutamate. The protein operates within amino-acid biosynthesis; L-serine biosynthesis; L-serine from 3-phospho-D-glycerate: step 2/3. Its pathway is cofactor biosynthesis; pyridoxine 5'-phosphate biosynthesis; pyridoxine 5'-phosphate from D-erythrose 4-phosphate: step 3/5. Functionally, catalyzes the reversible conversion of 3-phosphohydroxypyruvate to phosphoserine and of 3-hydroxy-2-oxo-4-phosphonooxybutanoate to phosphohydroxythreonine. This Bordetella pertussis (strain Tohama I / ATCC BAA-589 / NCTC 13251) protein is Phosphoserine aminotransferase.